The following is a 353-amino-acid chain: Protein RecA (353 aa).

67–74 (GPESSGKT) provides a ligand contact to ATP.

It belongs to the RecA family.

It is found in the cytoplasm. In terms of biological role, can catalyze the hydrolysis of ATP in the presence of single-stranded DNA, the ATP-dependent uptake of single-stranded DNA by duplex DNA, and the ATP-dependent hybridization of homologous single-stranded DNAs. It interacts with LexA causing its activation and leading to its autocatalytic cleavage. This is Protein RecA from Salmonella paratyphi A (strain ATCC 9150 / SARB42).